Reading from the N-terminus, the 163-residue chain is Large ribosomal subunit protein uL11 (163 aa).

Residues 1–25 are disordered; the sequence is MAGTIEVLVAGGQADPGPPLGPELG.

Belongs to the universal ribosomal protein uL11 family. As to quaternary structure, part of the ribosomal stalk of the 50S ribosomal subunit. Interacts with L10 and the large rRNA to form the base of the stalk. L10 forms an elongated spine to which L12 dimers bind in a sequential fashion forming a multimeric L10(L12)X complex.

In terms of biological role, forms part of the ribosomal stalk which helps the ribosome interact with GTP-bound translation factors. The chain is Large ribosomal subunit protein uL11 from Natronomonas pharaonis (strain ATCC 35678 / DSM 2160 / CIP 103997 / JCM 8858 / NBRC 14720 / NCIMB 2260 / Gabara) (Halobacterium pharaonis).